Here is a 204-residue protein sequence, read N- to C-terminus: Leucyl/phenylalanyl-tRNA--protein transferase (204 aa).

Belongs to the L/F-transferase family.

The protein localises to the cytoplasm. The enzyme catalyses N-terminal L-lysyl-[protein] + L-leucyl-tRNA(Leu) = N-terminal L-leucyl-L-lysyl-[protein] + tRNA(Leu) + H(+). The catalysed reaction is N-terminal L-arginyl-[protein] + L-leucyl-tRNA(Leu) = N-terminal L-leucyl-L-arginyl-[protein] + tRNA(Leu) + H(+). It catalyses the reaction L-phenylalanyl-tRNA(Phe) + an N-terminal L-alpha-aminoacyl-[protein] = an N-terminal L-phenylalanyl-L-alpha-aminoacyl-[protein] + tRNA(Phe). Its function is as follows. Functions in the N-end rule pathway of protein degradation where it conjugates Leu, Phe and, less efficiently, Met from aminoacyl-tRNAs to the N-termini of proteins containing an N-terminal arginine or lysine. In Agrobacterium fabrum (strain C58 / ATCC 33970) (Agrobacterium tumefaciens (strain C58)), this protein is Leucyl/phenylalanyl-tRNA--protein transferase.